Reading from the N-terminus, the 121-residue chain is DNA-directed RNA polymerase subunit omega (121 aa).

A disordered region spans residues 95 to 121 (DGDAANDLQGEEDDLGLGLDEAEDLGF). The span at 103-121 (QGEEDDLGLGLDEAEDLGF) shows a compositional bias: acidic residues.

It belongs to the RNA polymerase subunit omega family. As to quaternary structure, the RNAP catalytic core consists of 2 alpha, 1 beta, 1 beta' and 1 omega subunit. When a sigma factor is associated with the core the holoenzyme is formed, which can initiate transcription.

The enzyme catalyses RNA(n) + a ribonucleoside 5'-triphosphate = RNA(n+1) + diphosphate. Promotes RNA polymerase assembly. Latches the N- and C-terminal regions of the beta' subunit thereby facilitating its interaction with the beta and alpha subunits. The sequence is that of DNA-directed RNA polymerase subunit omega from Magnetococcus marinus (strain ATCC BAA-1437 / JCM 17883 / MC-1).